Consider the following 298-residue polypeptide: ATP synthase gamma chain (298 aa).

Belongs to the ATPase gamma chain family. As to quaternary structure, F-type ATPases have 2 components, CF(1) - the catalytic core - and CF(0) - the membrane proton channel. CF(1) has five subunits: alpha(3), beta(3), gamma(1), delta(1), epsilon(1). CF(0) has three main subunits: a, b and c.

The protein localises to the cell inner membrane. In terms of biological role, produces ATP from ADP in the presence of a proton gradient across the membrane. The gamma chain is believed to be important in regulating ATPase activity and the flow of protons through the CF(0) complex. This chain is ATP synthase gamma chain, found in Albidiferax ferrireducens (strain ATCC BAA-621 / DSM 15236 / T118) (Rhodoferax ferrireducens).